We begin with the raw amino-acid sequence, 310 residues long: MKVKSILKHSRMSSPSLETDSMESGQQQNMVSSTPSIDMNESDCSGTGTPSEERIRRLRWDEENLSKAEQQKSAKMKITEPKTPFQRFLLPDDEVPEINLDETDSKDDFTAGTLGDTLGTLPSTRVSKDSKDDNVSFSSDKKQFYVKKEPFPVPCTEPTTSGDRYTVRMKAPTPKYSTDNHLPSKKELFPRETKPQVEVVHARINNPDDHLRTHPSVNNLGKDSDHADKMYNEGVILGEDEAMEEEALSEAEENIPKKKPDFNELRKKHYFAMAKPLKRDELESSGTESDLERDNSDSGSASDVNMNENE.

Basic residues predominate over residues 1–11; that stretch reads MKVKSILKHSR. Disordered regions lie at residues 1 to 227 and 242 to 310; these read MKVK…SDHA and AMEE…NENE. Polar residues predominate over residues 12-50; the sequence is MSSPSLETDSMESGQQQNMVSSTPSIDMNESDCSGTGTP. The segment covering 51-80 has biased composition (basic and acidic residues); sequence SEERIRRLRWDEENLSKAEQQKSAKMKITE. A compositionally biased stretch (acidic residues) spans 91-105; sequence PDDEVPEINLDETDS. The segment covering 110–121 has biased composition (low complexity); sequence TAGTLGDTLGTL. Composition is skewed to basic and acidic residues over residues 126–150 and 182–195; these read VSKD…KKEP and LPSK…ETKP. The span at 242 to 253 shows a compositional bias: acidic residues; the sequence is AMEEEALSEAEE. Basic and acidic residues predominate over residues 254–265; the sequence is NIPKKKPDFNEL. Ser-285 carries the post-translational modification Phosphoserine. Residues 297–310 are compositionally biased toward polar residues; that stretch reads DSGSASDVNMNENE.

This is an uncharacterized protein from Schizosaccharomyces pombe (strain 972 / ATCC 24843) (Fission yeast).